Here is a 323-residue protein sequence, read N- to C-terminus: Porphobilinogen deaminase (323 aa).

Cysteine 240 is subject to S-(dipyrrolylmethanemethyl)cysteine.

The protein belongs to the HMBS family. Monomer. The cofactor is dipyrromethane.

It catalyses the reaction 4 porphobilinogen + H2O = hydroxymethylbilane + 4 NH4(+). It participates in porphyrin-containing compound metabolism; protoporphyrin-IX biosynthesis; coproporphyrinogen-III from 5-aminolevulinate: step 2/4. Functionally, tetrapolymerization of the monopyrrole PBG into the hydroxymethylbilane pre-uroporphyrinogen in several discrete steps. The chain is Porphobilinogen deaminase from Sulfurovum sp. (strain NBC37-1).